The following is a 110-amino-acid chain: UPF0060 membrane protein Bamb_1160 (110 aa).

Transmembrane regions (helical) follow at residues 9–29 (ALFA…WLVL), 34–54 (PVWL…LLTL), 66–86 (YGGV…GVAL), and 88–108 (RWDA…ALQP).

It belongs to the UPF0060 family.

It localises to the cell inner membrane. The sequence is that of UPF0060 membrane protein Bamb_1160 from Burkholderia ambifaria (strain ATCC BAA-244 / DSM 16087 / CCUG 44356 / LMG 19182 / AMMD) (Burkholderia cepacia (strain AMMD)).